Here is a 277-residue protein sequence, read N- to C-terminus: Probable ABC transporter permease protein y4oR (277 aa).

The next 7 helical transmembrane spans lie at 15–35, 79–99, 109–129, 140–160, 189–209, 213–233, and 242–262; these read LWTL…TWMV, VVTI…AYAL, LLVA…VPVY, TYQA…IWLM, IMMP…FIAV, FLFA…AMLG, and WDAV…FAFI. Residues 74-263 enclose the ABC transmembrane type-1 domain; it reads IINSAVVTIV…TPVIAFAFIM (190 aa).

This sequence belongs to the binding-protein-dependent transport system permease family. MalFG subfamily.

It localises to the cell inner membrane. Its function is as follows. Probably part of the binding-protein-dependent transport system y4oPQRS. This system probably transports a sugar-like molecule. Probably responsible for the translocation of the substrate across the membrane. This chain is Probable ABC transporter permease protein y4oR, found in Sinorhizobium fredii (strain NBRC 101917 / NGR234).